Consider the following 156-residue polypeptide: Anaerobic nitrite reductase HB2 (156 aa).

The Globin domain maps to 2–151; the sequence is GFTDKQEALV…LASAIKAEMH (150 aa). A Homodimerization motif is present at residues 35-39; that stretch reads EIAPV. The heme b site is built by Ser45, Lys59, His63, and His98. The short motif at 105 to 117 is the Homodimerization element; sequence DPHFEVVKEALLR.

It belongs to the plant globin family. As to quaternary structure, homodimer. The cofactor is heme b.

Its subcellular location is the cytoplasm. It localises to the nucleus. The enzyme catalyses Fe(III)-heme b-[protein] + nitric oxide + H2O = Fe(II)-heme b-[protein] + nitrite + 2 H(+). Functionally, phytoglobin that reduces nitrite to nitric oxide (NO) under anoxic conditions (e.g. during flooding or in waterlogged soil). May not function as an oxygen storage or transport protein. Has an unusually high affinity for O(2) through an hexacoordinate heme iron because of a very low dissociation constant. In Solanum lycopersicum (Tomato), this protein is Anaerobic nitrite reductase HB2.